A 429-amino-acid polypeptide reads, in one-letter code: Probable M18 family aminopeptidase 2 (429 aa).

Zn(2+)-binding residues include histidine 82, histidine 156, and histidine 401.

Belongs to the peptidase M18 family. Requires Zn(2+) as cofactor.

This chain is Probable M18 family aminopeptidase 2, found in Pseudomonas fluorescens (strain Pf0-1).